A 91-amino-acid polypeptide reads, in one-letter code: Small ribosomal subunit protein bS6 (91 aa).

Belongs to the bacterial ribosomal protein bS6 family.

In terms of biological role, binds together with bS18 to 16S ribosomal RNA. This Leptospira biflexa serovar Patoc (strain Patoc 1 / Ames) protein is Small ribosomal subunit protein bS6.